The following is a 401-amino-acid chain: Acetate kinase (401 aa).

N9 lines the Mg(2+) pocket. K16 is a binding site for ATP. R88 contacts substrate. Residue D147 is the Proton donor/acceptor of the active site. ATP-binding positions include 207–211, 282–284, and 333–337; these read HLGNG, DCR, and GIGEN. Residue E388 participates in Mg(2+) binding.

Belongs to the acetokinase family. In terms of assembly, homodimer. Mg(2+) is required as a cofactor. The cofactor is Mn(2+).

The protein resides in the cytoplasm. The catalysed reaction is acetate + ATP = acetyl phosphate + ADP. It functions in the pathway metabolic intermediate biosynthesis; acetyl-CoA biosynthesis; acetyl-CoA from acetate: step 1/2. Functionally, catalyzes the formation of acetyl phosphate from acetate and ATP. Can also catalyze the reverse reaction. The protein is Acetate kinase of Haemophilus influenzae (strain PittGG).